Consider the following 2610-residue polypeptide: E3 ubiquitin-protein ligase HECTD1 (2610 aa).

Residues 246 to 269 (TVSGPSSACKPGRSTTGAPSTTAD) form a disordered region. Positions 258–269 (RSTTGAPSTTAD) are enriched in polar residues. ANK repeat units lie at residues 395-424 (VGQTLLNWASAFGTQEMVEFLCERGADVNR), 426-455 (QRSSSLHYAACFGRPQVAKTLLRHGANPDL), 459-491 (DGKTPLDKARERGHSEVVAILQSPGDWMCPVNK), and 579-612 (ITATVLDQEDDDDGHLLALQIIRDLVDKGGDIFL). The disordered stretch occupies residues 489 to 513 (VNKGDDKKKKDTNKDEEECNEPKGD). A compositionally biased stretch (basic and acidic residues) spans 491–501 (KGDDKKKKDTN). Disordered stretches follow at residues 627–657 (LAGPSSDDENEEESKPEKEDEPQEDAKELQQ) and 707–748 (SSGS…LSAP). Serine 631 and serine 640 each carry phosphoserine. Basic and acidic residues predominate over residues 639-657 (ESKPEKEDEPQEDAKELQQ). Residues 707–717 (SSGSPEGGSDS) are compositionally biased toward low complexity. Residues 718–729 (SESRSEFLEKLQ) are compositionally biased toward basic and acidic residues. An MIB/HERC2 domain is found at 1266–1338 (VRSQVLKYMV…KFDLKLAPGY (73 aa)). 2 disordered regions span residues 1343–1406 (VASP…KTER) and 1433–1483 (ENVP…SMGI). The span at 1348–1365 (PVSSTVSGTTQSWSSLVK) shows a compositional bias: polar residues. Composition is skewed to low complexity over residues 1373 to 1395 (SAAAGSSSRKGSSSSVCSVASSS) and 1441 to 1458 (GSSSSASTSTLTAETGSE). Serine 1384 bears the Phosphoserine mark. The segment covering 1469-1479 (SVRTPGESSAI) has biased composition (polar residues). The residue at position 1488 (serine 1488) is a Phosphoserine. The disordered stretch occupies residues 1496–1515 (ELTNKEAASQRPLSSSASNR). Serine 1567 carries the phosphoserine modification. 2 disordered regions span residues 1592-1611 (GAQSFPNLTTPGTTSTVTMS) and 1674-1757 (ELDD…KGGR). Over residues 1600–1611 (TTPGTTSTVTMS) the composition is skewed to low complexity. The span at 1674-1703 (ELDDDEDLPEPDEEDDENEDDNQEDQEYEE) shows a compositional bias: acidic residues. A Phosphothreonine modification is found at threonine 1760. Serine 1772 is subject to Phosphoserine. A disordered region spans residues 1777–1797 (AFDPRPGRTNVQQTTDLEIPP). The tract at residues 2029–2103 (FTFPPDEFTS…AIVWLQNRRE (75 aa)) is K-box. Residues 2151 to 2610 (IHADRKSVLE…ATMEKGFHLN (460 aa)) form the HECT domain. Residues 2297–2318 (HCTESQSEASTEEGHDSLSVGS) are disordered. Residue serine 2318 is modified to Phosphoserine. Cysteine 2579 serves as the catalytic Glycyl thioester intermediate.

The protein belongs to the UPL family. K-HECT subfamily. Interacts with IGSF1.

It carries out the reaction S-ubiquitinyl-[E2 ubiquitin-conjugating enzyme]-L-cysteine + [acceptor protein]-L-lysine = [E2 ubiquitin-conjugating enzyme]-L-cysteine + N(6)-ubiquitinyl-[acceptor protein]-L-lysine.. Its pathway is protein modification; protein ubiquitination. In terms of biological role, E3 ubiquitin-protein ligase which accepts ubiquitin from an E2 ubiquitin-conjugating enzyme in the form of a thioester and then directly transfers the ubiquitin to targeted substrates. Mediates 'Lys-63'-linked polyubiquitination of HSP90AA1 which leads to its intracellular localization and reduced secretion. Negatively regulating HSP90AA1 secretion in cranial mesenchyme cells may impair their emigration and may be essential for the correct development of the cranial neural folds and neural tube closure. Catalyzes ubiquitination and degradation of ZNF622, an assembly factor for the ribosomal 60S subunit, in hematopoietic cells, thereby promoting hematopoietic stem cell renewal. This chain is E3 ubiquitin-protein ligase HECTD1, found in Homo sapiens (Human).